The primary structure comprises 257 residues: Protein KlaA (257 aa).

Functionally, belongs to the kla operon, which is associated with cryptic tellurite resistance, and IncW plasmid fertility inhibition. This Escherichia coli protein is Protein KlaA (klaA).